A 152-amino-acid polypeptide reads, in one-letter code: Large ribosomal subunit protein bL9 (152 aa).

The protein belongs to the bacterial ribosomal protein bL9 family.

In terms of biological role, binds to the 23S rRNA. In Chlorobaculum tepidum (strain ATCC 49652 / DSM 12025 / NBRC 103806 / TLS) (Chlorobium tepidum), this protein is Large ribosomal subunit protein bL9.